Consider the following 257-residue polypeptide: Imidazole glycerol phosphate synthase subunit HisF (257 aa).

Active-site residues include Asp12 and Asp131.

The protein belongs to the HisA/HisF family. In terms of assembly, heterodimer of HisH and HisF.

The protein resides in the cytoplasm. The catalysed reaction is 5-[(5-phospho-1-deoxy-D-ribulos-1-ylimino)methylamino]-1-(5-phospho-beta-D-ribosyl)imidazole-4-carboxamide + L-glutamine = D-erythro-1-(imidazol-4-yl)glycerol 3-phosphate + 5-amino-1-(5-phospho-beta-D-ribosyl)imidazole-4-carboxamide + L-glutamate + H(+). Its pathway is amino-acid biosynthesis; L-histidine biosynthesis; L-histidine from 5-phospho-alpha-D-ribose 1-diphosphate: step 5/9. IGPS catalyzes the conversion of PRFAR and glutamine to IGP, AICAR and glutamate. The HisF subunit catalyzes the cyclization activity that produces IGP and AICAR from PRFAR using the ammonia provided by the HisH subunit. This Burkholderia orbicola (strain MC0-3) protein is Imidazole glycerol phosphate synthase subunit HisF.